Reading from the N-terminus, the 370-residue chain is UDP-galactose transporter homolog 1 (370 aa).

10 helical membrane passes run 22-42, 62-82, 115-135, 145-165, 175-195, 204-224, 242-262, 280-300, 307-327, and 333-353; these read ALTL…WSIL, IIIN…YNYV, CNVL…SPIG, LAYL…HFIF, YLVA…HVTT, TLLG…TNST, LMSL…IIFH, LIDI…IFII, IILI…SVIL, and SWEQ…EAFI.

The protein belongs to the nucleotide-sugar transporter family. SLC35B subfamily.

It is found in the endoplasmic reticulum membrane. Functionally, may be involved in specific transport of UDP-Gal from the cytosol to the Golgi lumen. Involved in the maintenance of optimal conditions for the folding of secretory pathway proteins in the endoplasmic reticulum. The polypeptide is UDP-galactose transporter homolog 1 (HUT1) (Candida albicans (strain SC5314 / ATCC MYA-2876) (Yeast)).